We begin with the raw amino-acid sequence, 397 residues long: Elongation factor Tu (397 aa).

Residues 10 to 207 (KPHVNVGTVG…AIDAYVPDPV (198 aa)) enclose the tr-type G domain. The segment at 19–26 (GHIDHGKT) is G1. 19–26 (GHIDHGKT) provides a ligand contact to GTP. Residue T26 participates in Mg(2+) binding. Positions 60 to 64 (GITIA) are G2. The interval 81-84 (DCPG) is G3. GTP is bound by residues 81-85 (DCPGH) and 136-139 (NKVD). A G4 region spans residues 136–139 (NKVD). Residues 174-176 (SAL) form a G5 region.

It belongs to the TRAFAC class translation factor GTPase superfamily. Classic translation factor GTPase family. EF-Tu/EF-1A subfamily. In terms of assembly, monomer.

The protein resides in the cytoplasm. The enzyme catalyses GTP + H2O = GDP + phosphate + H(+). Functionally, GTP hydrolase that promotes the GTP-dependent binding of aminoacyl-tRNA to the A-site of ribosomes during protein biosynthesis. The sequence is that of Elongation factor Tu from Syntrophobacter fumaroxidans (strain DSM 10017 / MPOB).